A 263-amino-acid polypeptide reads, in one-letter code: L-histidine 2-aminobutanoyltransferase (263 aa).

Belongs to the methyltransferase superfamily. CntL family.

The enzyme catalyses L-histidine + S-adenosyl-L-methionine = (2S)-2-amino-4-{[(1S)-1-carboxy-2-(1H-imidazol-4-yl)ethyl]amino}butanoate + S-methyl-5'-thioadenosine + H(+). In terms of biological role, catalyzes the nucleophilic attack of one alpha-aminobutanoate moiety from SAM onto L-histidine to produce the intermediate (2S)-2-amino-4-{[(1S)-1-carboxy-2-(1H-imidazol-4-yl)ethyl]amino}butanoate. Functions in the biosynthesis of the metallophore pseudopaline, which is involved in the acquisition of nickel and zinc, and thus enables bacterial growth inside the host, where metal access is limited. Therefore, this enzyme probably contributes to Pseudomonas virulence. Appears to be specific for L-histidine as substrate. The sequence is that of L-histidine 2-aminobutanoyltransferase from Pseudomonas aeruginosa (strain ATCC 15692 / DSM 22644 / CIP 104116 / JCM 14847 / LMG 12228 / 1C / PRS 101 / PAO1).